Consider the following 204-residue polypeptide: Prephenate decarboxylase (204 aa).

It belongs to the prephenate decarboxylase family.

The protein localises to the cytoplasm. The enzyme catalyses prephenate + H(+) = 3-[(4R)-4-hydroxycyclohexa-1,5-dien-1-yl]-2-oxopropanoate + CO2. It functions in the pathway antibiotic biosynthesis; bacilysin biosynthesis. Part of the bacABCDEF operon responsible for the biosynthesis of the nonribosomally synthesized dipeptide antibiotic bacilysin, composed of L-alanine and L-anticapsin. Bacilysin is an irreversible inactivator of the glutaminase domain of glucosamine synthetase. BacA is an unusual prephenate decarboxylase that avoids the typical aromatization of the cyclohexadienol ring of prephenate. BacA catalyzes the protonation of prephenate (1-carboxy-4-hydroxy-alpha-oxo-2,5-cyclohexadiene-1-propanoic acid) at C6 position, followed by a decarboxylation to produce the endocyclic-delta(4),delta(8)-7R-dihydro-hydroxyphenylpyruvate (en-H2HPP). En-H2HPP is able to undergo a slow nonenzymatic isomerization to produce the exocyclic-delta(3),delta(5)-dihydro-hydroxyphenylpyruvate (ex-H2HPP). BacA isomerizes only the pro-R double bond in prephenate. The chain is Prephenate decarboxylase from Bacillus subtilis.